Reading from the N-terminus, the 402-residue chain is Arginine biosynthesis bifunctional protein ArgJ (402 aa).

The substrate site is built by threonine 149, lysine 175, threonine 186, glutamate 266, asparagine 397, and threonine 402. Threonine 186 (nucleophile) is an active-site residue.

This sequence belongs to the ArgJ family. Heterotetramer of two alpha and two beta chains.

The protein resides in the cytoplasm. It catalyses the reaction N(2)-acetyl-L-ornithine + L-glutamate = N-acetyl-L-glutamate + L-ornithine. It carries out the reaction L-glutamate + acetyl-CoA = N-acetyl-L-glutamate + CoA + H(+). Its pathway is amino-acid biosynthesis; L-arginine biosynthesis; L-ornithine and N-acetyl-L-glutamate from L-glutamate and N(2)-acetyl-L-ornithine (cyclic): step 1/1. It functions in the pathway amino-acid biosynthesis; L-arginine biosynthesis; N(2)-acetyl-L-ornithine from L-glutamate: step 1/4. Functionally, catalyzes two activities which are involved in the cyclic version of arginine biosynthesis: the synthesis of N-acetylglutamate from glutamate and acetyl-CoA as the acetyl donor, and of ornithine by transacetylation between N(2)-acetylornithine and glutamate. The protein is Arginine biosynthesis bifunctional protein ArgJ of Prochlorococcus marinus subsp. pastoris (strain CCMP1986 / NIES-2087 / MED4).